We begin with the raw amino-acid sequence, 289 residues long: Protease HtpX homolog (289 aa).

2 helical membrane-spanning segments follow: residues 10–30 and 34–54; these read TAAL…VIGS and STTP…YGYW. Zn(2+) is bound at residue His-138. Residue Glu-139 is part of the active site. Position 142 (His-142) interacts with Zn(2+). Transmembrane regions (helical) follow at residues 153 to 173 and 182 to 202; these read VAAA…IFGG and LAVM…QSAI. A Zn(2+)-binding site is contributed by Glu-207.

The protein belongs to the peptidase M48B family. It depends on Zn(2+) as a cofactor.

It localises to the cell membrane. The sequence is that of Protease HtpX homolog from Arthrobacter sp. (strain FB24).